A 498-amino-acid polypeptide reads, in one-letter code: uncharacterized protein (498 aa).

329–336 is a binding site for ATP; the sequence is GNPGTGKS.

The protein localises to the secreted. The protein resides in the cell wall. This is an uncharacterized protein from Mycobacterium tuberculosis (strain CDC 1551 / Oshkosh).